The chain runs to 423 residues: Imidazolonepropionase (423 aa).

His78 and His80 together coordinate Fe(3+). Zn(2+)-binding residues include His78 and His80. Positions 87, 150, and 183 each coordinate 4-imidazolone-5-propanoate. Tyr150 provides a ligand contact to N-formimidoyl-L-glutamate. Position 247 (His247) interacts with Fe(3+). His247 is a Zn(2+) binding site. Glu250 contacts 4-imidazolone-5-propanoate. Asp322 lines the Fe(3+) pocket. Residue Asp322 participates in Zn(2+) binding. N-formimidoyl-L-glutamate-binding residues include Asn324 and Gly326. Residue Ser327 participates in 4-imidazolone-5-propanoate binding.

Belongs to the metallo-dependent hydrolases superfamily. HutI family. It depends on Zn(2+) as a cofactor. Fe(3+) is required as a cofactor.

It is found in the cytoplasm. The catalysed reaction is 4-imidazolone-5-propanoate + H2O = N-formimidoyl-L-glutamate. Its pathway is amino-acid degradation; L-histidine degradation into L-glutamate; N-formimidoyl-L-glutamate from L-histidine: step 3/3. Catalyzes the hydrolytic cleavage of the carbon-nitrogen bond in imidazolone-5-propanoate to yield N-formimidoyl-L-glutamate. It is the third step in the universal histidine degradation pathway. In Bacillus cytotoxicus (strain DSM 22905 / CIP 110041 / 391-98 / NVH 391-98), this protein is Imidazolonepropionase.